The sequence spans 560 residues: Leiomodin-3 (560 aa).

Residues 1-49 (MSEHSRNSDQEELLDEEINEDEILANLSAEELKELQSEMEVMAPDPSLP) are interaction with tropomyosin alpha. A coiled-coil region spans residues 16–42 (EEINEDEILANLSAEELKELQSEMEVM). 2 disordered regions span residues 45–68 (DPSLPVGMIQKDQTDKPPTGNFNH) and 127–217 (IVAN…SKLD). Residues 142–167 (ETDEEDEEEEDDDDDDEGEDDGEESE) are compositionally biased toward acidic residues. A compositionally biased stretch (basic and acidic residues) spans 168-182 (ETNREEEGKAKEQIR). A compositionally biased stretch (polar residues) spans 183–192 (NCENNCQQVT). The span at 194–217 (KAFKEQRDRPEAQEQSEKKISKLD) shows a compositional bias: basic and acidic residues. Positions 386 to 425 (VTNLLTRNQDKQRQKRQEEQKQQQLKEQKKLIAMLENGLG) form a coiled coil. 2 disordered regions span residues 437-480 (PKPD…KYRT) and 494-530 (QRKSRMPEAREPPEKTNLKDVIKTLKPVPRNRPPPLV). Pro residues predominate over residues 448–458 (QPPPPRPPNPQ). The span at 498–516 (RMPEAREPPEKTNLKDVIK) shows a compositional bias: basic and acidic residues. Residues 534–553 (PRDQLLNDIRHSSVAYLKPV) enclose the WH2 domain.

It belongs to the tropomodulin family. May interact with tropomyosin alpha (TPM1/2) N-terminus. Interacts with KLHL40; leading to stabilization. Ubiquitinated, leading to its degradation. Interaction with KLHL40 negatively regulates ubiquitination and degradation. As to expression, expressed in cardiac and at higher levels in skeletal muscles (at protein level).

Its subcellular location is the cytoplasm. It is found in the myofibril. The protein resides in the sarcomere. It localises to the m line. The protein localises to the a band. Its subcellular location is the cytoskeleton. Functionally, essential for the organization of sarcomeric actin thin filaments in skeletal muscle. Increases the rate of actin polymerization. This is Leiomodin-3 (LMOD3) from Homo sapiens (Human).